We begin with the raw amino-acid sequence, 529 residues long: Ribonuclease Y (529 aa).

Residues 4–24 (GLIYISLEVLVACLITALIMY) form a helical membrane-spanning segment. The KH domain occupies 216-297 (LTSRIALPCS…NRIEEVYHRV (82 aa)). An HD domain is found at 342 to 435 (ALQHSKEVAL…VCAADALSAG (94 aa)).

This sequence belongs to the RNase Y family.

It localises to the cell membrane. Functionally, endoribonuclease that initiates mRNA decay. The chain is Ribonuclease Y from Helicobacter pylori (strain J99 / ATCC 700824) (Campylobacter pylori J99).